Here is a 28-residue protein sequence, read N- to C-terminus: Cysteine-rich venom protein asurin-2 (28 aa).

A compositionally biased stretch (basic and acidic residues) spans 1–15 (SNKKDYRKEIVDKHN). Residues 1–28 (SNKKDYRKEIVDKHNALSRSVKPTASNM) are disordered. Residues 17–28 (LSRSVKPTASNM) are compositionally biased toward polar residues.

Belongs to the CRISP family. Contains 8 disulfide bonds. Expressed by the venom gland.

It localises to the secreted. Blocks contraction of smooth muscle elicited by high potassium-induced depolarization, but does not block caffeine-stimulated contraction. May target voltage-gated calcium channels on smooth muscle. The sequence is that of Cysteine-rich venom protein asurin-2 from Austrelaps superbus (Lowland copperhead snake).